Consider the following 645-residue polypeptide: 1,4-alpha-glucan branching enzyme GlgB (645 aa).

Catalysis depends on Asp309, which acts as the Nucleophile. Glu352 (proton donor) is an active-site residue. A disordered region spans residues 619 to 645 (VKTRKGSKKQDGSKTKVRSNVTSRGKR). A compositionally biased stretch (polar residues) spans 636–645 (RSNVTSRGKR).

It belongs to the glycosyl hydrolase 13 family. GlgB subfamily. As to quaternary structure, monomer.

It carries out the reaction Transfers a segment of a (1-&gt;4)-alpha-D-glucan chain to a primary hydroxy group in a similar glucan chain.. The protein operates within glycan biosynthesis; glycogen biosynthesis. Catalyzes the formation of the alpha-1,6-glucosidic linkages in glycogen by scission of a 1,4-alpha-linked oligosaccharide from growing alpha-1,4-glucan chains and the subsequent attachment of the oligosaccharide to the alpha-1,6 position. The polypeptide is 1,4-alpha-glucan branching enzyme GlgB (Bacillus cereus (strain 03BB102)).